Reading from the N-terminus, the 135-residue chain is Protein PsiE homolog (135 aa).

The next 4 helical transmembrane spans lie at 20-40, 54-74, 82-102, and 107-127; these read VGLLLLAAILIVFLVKETIHL, YLLIEGIVIYFLYFEFIALIV, HFPLRYFIYIGITAIIRLIIV, and PIDTLIYSAAILLLVVTLYLA.

Belongs to the PsiE family.

Its subcellular location is the cell inner membrane. This Serratia proteamaculans (strain 568) protein is Protein PsiE homolog.